Reading from the N-terminus, the 804-residue chain is MSFQHEKIEKKWQNYWLDHKTFAVSEENDKPKFYALDMFPYPSGAGLHVGHPEGYTATDILSRMRRMQGYNVLHPMGWDAFGLPAEQYALDTGNDPAEFTKQNIDNFRRQIQSLGFSYDWDREINTTDPDYYKWTQWIFTKLYEKGLAYVDEVPVNWCPALGTVLANEEVIDGKSERGGHPVERRPMRQWMLKITAYADRLLEDLEDLDWPESIKDMQRNWIGRSEGANVHFAIDGTDDTFTVFTTRPDTLFGAAYAVLAPEHELVEAITTPEQKEAVDAYVKEVQAKSDLERTDLAKTKTGVFTGAYAVNPANGEKLPIWIADYVLASYGTGAVMAVPAHDERDFEFAKVFSLPVKEVVKGGNTEEEAYTGDGEHVNSGFLNGLKKAEAIEKMIAWLEETKNGEKKVTYRLRDWLFSRQRYWGEPIPVIHWEDGTSTAVPAEELPLILPKTDEIKPSGTGESPLANIKEWVEVTDPETGKKGRRETNTMPQWAGSCWYFLRFIDPKNPDQLASPEKLDKWLPVDIYIGGAEHAVLHLLYARFWHKFLYDIGVVPTKEPFQKLYNQGMILGENNEKMSKSRGNVVNPDEIVASHGADTLRLYEMFMGPLDASIAWSESGLDGARRFLDRVWRLFIEENGELTGKVTEGAGETLERVYHETVMKVTENFEALRFNTGISQLMVFINEAYKANELPREYIEGFVKLLSPIAPHLAEELWEKLGHEGSIAYEAWPAYDESKLVDDEVEIVVQLNGKVKAKLMVPADADKAALEQLAQADEKVKEQLEGKTIRKIIAVPGKLVNIVAN.

Residues 40-51 carry the 'HIGH' region motif; that stretch reads PYPSGAGLHVGH. A 'KMSKS' region motif is present at residues 576–580; the sequence is KMSKS. Lys-579 provides a ligand contact to ATP.

The protein belongs to the class-I aminoacyl-tRNA synthetase family.

Its subcellular location is the cytoplasm. It carries out the reaction tRNA(Leu) + L-leucine + ATP = L-leucyl-tRNA(Leu) + AMP + diphosphate. This is Leucine--tRNA ligase from Bacillus velezensis (strain DSM 23117 / BGSC 10A6 / LMG 26770 / FZB42) (Bacillus amyloliquefaciens subsp. plantarum).